We begin with the raw amino-acid sequence, 226 residues long: 2,3-bisphosphoglycerate-dependent phosphoglycerate mutase (226 aa).

Substrate-binding positions include 8–15 (RHGQSQWN), 21–22 (TG), Arg-58, 112–115 (ERMY), Lys-123, 139–140 (RR), and 183–184 (GN). His-9 (tele-phosphohistidine intermediate) is an active-site residue. Residue Glu-112 is the Proton donor/acceptor of the active site.

Belongs to the phosphoglycerate mutase family. BPG-dependent PGAM subfamily.

The catalysed reaction is (2R)-2-phosphoglycerate = (2R)-3-phosphoglycerate. The protein operates within carbohydrate degradation; glycolysis; pyruvate from D-glyceraldehyde 3-phosphate: step 3/5. Catalyzes the interconversion of 2-phosphoglycerate and 3-phosphoglycerate. This chain is 2,3-bisphosphoglycerate-dependent phosphoglycerate mutase, found in Protochlamydia amoebophila (strain UWE25).